The chain runs to 40 residues: Large ribosomal subunit protein bL36 (40 aa).

Belongs to the bacterial ribosomal protein bL36 family.

In Corynebacterium glutamicum (strain R), this protein is Large ribosomal subunit protein bL36.